A 483-amino-acid chain; its full sequence is Rhamnulokinase (483 aa).

11–15 (ASSGR) contributes to the ATP binding site. Substrate contacts are provided by residues Gly79 and 234-236 (HDT). The Proton acceptor role is filled by Asp235. Thr257 lines the ATP pocket. Residue Asn294 coordinates substrate. Gln302 is an ATP binding site. Cys352 and Cys369 form a disulfide bridge. Position 401 (Gly401) interacts with ATP.

This sequence belongs to the rhamnulokinase family. The cofactor is Mg(2+).

It carries out the reaction L-rhamnulose + ATP = L-rhamnulose 1-phosphate + ADP + H(+). It participates in carbohydrate degradation; L-rhamnose degradation; glycerone phosphate from L-rhamnose: step 2/3. Involved in the catabolism of L-rhamnose (6-deoxy-L-mannose). Catalyzes the transfer of the gamma-phosphate group from ATP to the 1-hydroxyl group of L-rhamnulose to yield L-rhamnulose 1-phosphate. The protein is Rhamnulokinase of Listeria innocua serovar 6a (strain ATCC BAA-680 / CLIP 11262).